Reading from the N-terminus, the 408-residue chain is MEAAPRSRPRPGGAAASPPPPPPPPPPEQERKLEQEKLSGVVKSVHRRLRKKYREVGDFDKIWREHCEDEETLCEYAVAMKNLADNHWAKTCEGEGRIEWCCSVCREYFQNGGKRKALEKDEKRALLASKSTPALNASQPPKIEDPLPNFGLTNHEAITEELLHSLGKIRLLDVGSCFNPFLKFEEFLTVGIDIVPAVESVYKCDFLNLQIQQPLQLAQDAIDAFLKQLKNPIDSLPGELFHVVVFSLLLSYFPSPYQRWICCKKAHELLVLNGLLLVITPDSSHQNRRAMMMKSWKIAIESLGFKRFKYSKFSHMHLMAFRKTSLQTTSDLVSRNYPGMLYIPQDFNSIEDEEYSNTSCYIRSDMEDEQLAYGFMELPDAPYDSDSGESQSSSIPFYELEDPVLLLS.

A compositionally biased stretch (low complexity) spans 1–16 (MEAAPRSRPRPGGAAA). The segment at 1–37 (MEAAPRSRPRPGGAAASPPPPPPPPPPEQERKLEQEK) is disordered. Over residues 17–27 (SPPPPPPPPPP) the composition is skewed to pro residues. Over residues 28–37 (EQERKLEQEK) the composition is skewed to basic and acidic residues. S-adenosyl-L-methionine is bound by residues arginine 97, glycine 175, aspartate 193, aspartate 205, phenylalanine 206, and serine 247.

The protein belongs to the BMT2/SAMTOR family. Interacts with the GATOR1 complex; interaction is disrupted when SAMTOR binds S-adenosyl-L-methionine. Interacts with the KICSTOR complex; interaction is disrupted when SAMTOR binds S-adenosyl-L-methionine.

Its function is as follows. S-adenosyl-L-methionine-binding protein that acts as an inhibitor of mTORC1 signaling via interaction with the GATOR1 and KICSTOR complexes. Acts as a sensor of S-adenosyl-L-methionine to signal methionine sufficiency to mTORC1: in presence of methionine, binds S-adenosyl-L-methionine, leading to disrupt interaction with the GATOR1 and KICSTOR complexes and promote mTORC1 signaling. Upon methionine starvation, S-adenosyl-L-methionine levels are reduced, thereby promoting the association with GATOR1 and KICSTOR, leading to inhibit mTORC1 signaling. Probably also acts as a S-adenosyl-L-methionine-dependent methyltransferase. This chain is S-adenosylmethionine sensor upstream of mTORC1, found in Gallus gallus (Chicken).